The chain runs to 137 residues: Putative nucleoside diphosphate kinase (137 aa).

ATP is bound by residues Phe45, Arg73, Thr79, Arg90, and Asn100. His103 (pros-phosphohistidine intermediate) is an active-site residue.

This sequence belongs to the NDK family. Mg(2+) is required as a cofactor.

The catalysed reaction is a 2'-deoxyribonucleoside 5'-diphosphate + ATP = a 2'-deoxyribonucleoside 5'-triphosphate + ADP. The enzyme catalyses a ribonucleoside 5'-diphosphate + ATP = a ribonucleoside 5'-triphosphate + ADP. Functionally, major role in the synthesis of nucleoside triphosphates other than ATP. The ATP gamma phosphate is transferred to the NDP beta phosphate via a ping-pong mechanism, using a phosphorylated active-site intermediate. In Homo sapiens (Human), this protein is Putative nucleoside diphosphate kinase (NME2P1).